The following is a 175-amino-acid chain: uncharacterized protein (175 aa).

In terms of domain architecture, HTH marR-type spans 10–157; sequence LFELYAELIH…AERLFRDLVT (148 aa). The segment at residues 68-91 is a DNA-binding region (H-T-H motif); that stretch reads VTSIAEKMNTTKATVSRISTKLLG.

Its subcellular location is the cytoplasm. This is an uncharacterized protein from Bacillus subtilis (strain 168).